The following is a 73-amino-acid chain: Conotoxin Bt11.1 (73 aa).

Positions 1–20 (MKLCVAFLLVLVILPSVIGG) are cleaved as a signal peptide. A propeptide spanning residues 21 to 35 (KPSERTLSGATRRGD) is cleaved from the precursor. Cystine bridges form between Cys-39/Cys-53, Cys-46/Cys-58, Cys-52/Cys-63, and Cys-57/Cys-70.

This sequence belongs to the conotoxin I1 superfamily. As to expression, expressed by the venom duct.

The protein localises to the secreted. This is Conotoxin Bt11.1 from Conus betulinus (Beech cone).